The primary structure comprises 94 residues: DNA-directed RNA polymerase subunit omega (94 aa).

It belongs to the RNA polymerase subunit omega family. Consists of a sigma factor and the RNAP core enzyme which is composed of 2 alpha chains, 1 beta chain, 1 beta' chain and 1 subunit omega.

It carries out the reaction RNA(n) + a ribonucleoside 5'-triphosphate = RNA(n+1) + diphosphate. In terms of biological role, promotes RNA polymerase assembly. Latches the N- and C-terminal regions of the beta' subunit thereby facilitating its interaction with the beta and alpha subunits. In Shewanella violacea (strain JCM 10179 / CIP 106290 / LMG 19151 / DSS12), this protein is DNA-directed RNA polymerase subunit omega.